Here is a 311-residue protein sequence, read N- to C-terminus: Methionyl-tRNA formyltransferase (311 aa).

110–113 (SLLP) lines the (6S)-5,6,7,8-tetrahydrofolate pocket.

This sequence belongs to the Fmt family.

It carries out the reaction L-methionyl-tRNA(fMet) + (6R)-10-formyltetrahydrofolate = N-formyl-L-methionyl-tRNA(fMet) + (6S)-5,6,7,8-tetrahydrofolate + H(+). Functionally, attaches a formyl group to the free amino group of methionyl-tRNA(fMet). The formyl group appears to play a dual role in the initiator identity of N-formylmethionyl-tRNA by promoting its recognition by IF2 and preventing the misappropriation of this tRNA by the elongation apparatus. The protein is Methionyl-tRNA formyltransferase of Streptococcus sanguinis (strain SK36).